Reading from the N-terminus, the 36-residue chain is Light-harvesting protein B-1015 gamma chain (36 aa).

Functionally, one of the components of the bacteriochlorophyll-protein complex in the chromatophore membrane. The polypeptide is Light-harvesting protein B-1015 gamma chain (Blastochloris viridis (Rhodopseudomonas viridis)).